The primary structure comprises 224 residues: Ribosomal RNA small subunit methyltransferase I (224 aa).

This sequence belongs to the methyltransferase superfamily. RsmI family.

It localises to the cytoplasm. It carries out the reaction cytidine(1402) in 16S rRNA + S-adenosyl-L-methionine = 2'-O-methylcytidine(1402) in 16S rRNA + S-adenosyl-L-homocysteine + H(+). In terms of biological role, catalyzes the 2'-O-methylation of the ribose of cytidine 1402 (C1402) in 16S rRNA. This is Ribosomal RNA small subunit methyltransferase I from Borrelia garinii subsp. bavariensis (strain ATCC BAA-2496 / DSM 23469 / PBi) (Borreliella bavariensis).